The chain runs to 267 residues: Ribosomal RNA small subunit methyltransferase A (267 aa).

6 residues coordinate S-adenosyl-L-methionine: Asn-16, Leu-18, Gly-43, Glu-64, Asp-88, and Asn-109.

Belongs to the class I-like SAM-binding methyltransferase superfamily. rRNA adenine N(6)-methyltransferase family. RsmA subfamily.

It is found in the cytoplasm. The catalysed reaction is adenosine(1518)/adenosine(1519) in 16S rRNA + 4 S-adenosyl-L-methionine = N(6)-dimethyladenosine(1518)/N(6)-dimethyladenosine(1519) in 16S rRNA + 4 S-adenosyl-L-homocysteine + 4 H(+). In terms of biological role, specifically dimethylates two adjacent adenosines (A1518 and A1519) in the loop of a conserved hairpin near the 3'-end of 16S rRNA in the 30S particle. May play a critical role in biogenesis of 30S subunits. This is Ribosomal RNA small subunit methyltransferase A from Acidithiobacillus ferrooxidans (strain ATCC 23270 / DSM 14882 / CIP 104768 / NCIMB 8455) (Ferrobacillus ferrooxidans (strain ATCC 23270)).